The primary structure comprises 188 residues: Vascular endothelial growth factor A-A (188 aa).

A signal peptide spans 1–23 (MNLVVYLIQLFLAALLHLSAVKA). Cystine bridges form between Cys-49/Cys-91, Cys-80/Cys-125, and Cys-84/Cys-127. Asn-98 carries an N-linked (GlcNAc...) asparagine glycan.

Belongs to the PDGF/VEGF growth factor family. As to quaternary structure, homodimer; disulfide-linked. Isoform VEGF165 binds kdr and kdrl. In terms of tissue distribution, predominantly expressed in regions associated with active vascularization. From 15-16 hours post-fertilization (hpf), expressed in the anterior forebrain, the mesoderm underlying and lateral to the anterior hindbrain, the mesoderm underlying and lateral to the posterior hindbrain, and in the ventral medial portions of the somites. By 30-36 hpf, expression in the somites is decreased, while strong expression is observed in the region of the developing glomeruli and in the anterior portion of the pronephric ducts, the pharyngeal arches, and the brain. By 72 hpf, expression remains only in the pronephros region.

The protein localises to the secreted. Growth factor active in angiogenesis, vasculogenesis and endothelial cell growth. Induces endothelial cell proliferation, promotes cell migration, inhibits apoptosis, and induces permeabilization of blood vessels. Required for intersegmental vessel development in the tail during embryogenesis. Acts both upstream of kdr and tie1 to stimulate endothelial cell differentiation, and upstream of gata1 to stimulate hematopoietic cell differentiation. The protein is Vascular endothelial growth factor A-A (vegfaa) of Danio rerio (Zebrafish).